Consider the following 246-residue polypeptide: Aquaporin AqpM (246 aa).

The Cytoplasmic segment spans residues 1-11 (MVSLTKRCIAE). Residues 12 to 32 (FIGTFFLVFFGAGAAAITLMI) traverse the membrane as a helical segment. Residues 33–45 (ASGGTAPNPFNIG) lie on the Extracellular side of the membrane. A helical transmembrane segment spans residues 46–66 (IGLLGGLGDWVAIGLAFGFAI). The Cytoplasmic segment spans residues 67–69 (AAS). The chain crosses the membrane as a helical span at residues 70–90 (IYALGNISGCHINPAVTIGLW). An NPA 1 motif is present at residues 82–84 (NPA). At 91–103 (SVKKFPGRDVVPY) the chain is on the extracellular side. The chain crosses the membrane as a helical span at residues 104–124 (IIAQLLGAAFASFIFLQCAGI). Topologically, residues 125–145 (TAATIGGLGATAPFPGIGYWQ) are cytoplasmic. The chain crosses the membrane as a helical span at residues 146–166 (AMLAETVGTFLLMITIMGIAV). Residues 167–172 (DERAPK) lie on the Extracellular side of the membrane. Residues 173-193 (GFAGIIIGLTVAGIITTIGNI) form a helical membrane-spanning segment. The Cytoplasmic segment spans residues 194-217 (TGSSLNPARTFGPYLNDMVFAGTN). The NPA 2 motif lies at 199–201 (NPA). A helical transmembrane segment spans residues 218-238 (LWNYFPIYVIGPVVGAVLAAL). The Extracellular segment spans residues 239–246 (TYQYLTSE).

The protein belongs to the MIP/aquaporin (TC 1.A.8) family. As to quaternary structure, homotetramer.

The protein resides in the cell membrane. Functionally, channel that permits osmotically driven movement of water in both directions. It mediates rapid entry or exit of water in response to abrupt changes in osmolarity. Also exhibits a transient but reproducible increase in the initial glycerol flux. The polypeptide is Aquaporin AqpM (aqpM) (Methanothermobacter thermautotrophicus (strain ATCC 29096 / DSM 1053 / JCM 10044 / NBRC 100330 / Delta H) (Methanobacterium thermoautotrophicum)).